An 89-amino-acid chain; its full sequence is Cell division topological specificity factor (89 aa).

The protein belongs to the MinE family.

Prevents the cell division inhibition by proteins MinC and MinD at internal division sites while permitting inhibition at polar sites. This ensures cell division at the proper site by restricting the formation of a division septum at the midpoint of the long axis of the cell. In Desulforudis audaxviator (strain MP104C), this protein is Cell division topological specificity factor.